The primary structure comprises 1141 residues: MINRDNKKAITKKGMISNRLNKFSIRKYTVGTASILVGTTLIFGLGNQEAKAAENTSTENAKQDDATTSDNKEVVSETENNSTTENDSTNPIKKETNTDSQPEAKEESTTSSTQQQQNNVTATTETKPQNIEKENVKPSTDKTATEDTSVILEEKKAPNYTNNDVTTKPSTSEIQTKPTTPQESTNIENSQPQPTPSKVDNQVTDATNPKEPVNVSKEELKNNPEKLKELVRNDNNTDRSTKPVATAPTSVAPKRLNAKMRFAVAQPAAVASNNVNDLITVTKQTIKVGDGKDNVAAAHDGKDIEYDTEFTIDNKVKKGDTMTINYDKNVIPSDLTDKNDPIDITDPSGEVIAKGTFDKATKQITYTFTDYVDKYEDIKARLTLYSYIDKQAVPNETSLNLTFATAGKETSQNVSVDYQDPMVHGDSNIQSIFTKLDENKQTIEQQIYVNPLKKTATNTKVDIAGSQVDDYGNIKLGNGSTIIDQNTEIKVYKVNPNQQLPQSNRIYDFSQYEDVTSQFDNKKSFSNNVATLDFGDINSAYIIKVVSKYTPTSDGELDIAQGTSMRTTDKYGYYNYAGYSNFIVTSNDTGGGDGTVKPEEKLYKIGDYVWEDVDKDGVQGTDSKEKPMANVLVTLTYPDGTTKSVRTDANGHYEFGGLKDGETYTVKFETPAGYLPTKVNGTTDGEKDSNGSSITVKINGKDDMSLDTGFYKEPKYNLGDYVWEDTNKDGIQDANEPGIKDVKVTLKDSTGKVIGTTTTDASGKYKFTDLDNGNYTVEFETPAGYTPTVKNTTAEDKDSNGLTTTGVIKDADNMTLDSGFYKTPKYSLGDYVWYDSNKDGKQDSTEKGIKDVKVTLLNEKGEVIGTTKTDENGKYRFDNLDSGKYKVIFEKPAGLTQTVTNTTEDDKDADGGEVDVTITDHDDFTLDNGYFEEDTSDSDSDSDSDSDSDSDSDSDSDSDSDSDSDSDSDSDSDSDSDSDSDSDSDSDSDSDSDSDSDSDSDSDSDSDSDSDSDSDSDSDSDSDSDSDSDSDSDSDSDSDSDSDSDSDSDSDSDSDSDSDSDSDSDSDSDSDSDSDSDSDSDAGKHTPVKPMSTTKDHHNKAKALPETGSENNGSNNATLFGGLFAALGSLLLFGRRKKQNK.

The signal sequence occupies residues 1 to 52 (MINRDNKKAITKKGMISNRLNKFSIRKYTVGTASILVGTTLIFGLGNQEAKA). A YSIRK-G/S signaling motif motif is present at residues 23 to 34 (FSIRKYTVGTAS). The interval 53–601 (AENTSTENAK…GDGTVKPEEK (549 aa)) is ligand binding A region. The interval 54–248 (ENTSTENAKQ…RSTKPVATAP (195 aa)) is disordered. Over residues 61–75 (AKQDDATTSDNKEVV) the composition is skewed to basic and acidic residues. A compositionally biased stretch (low complexity) spans 77–90 (ETENNSTTENDSTN). Residues 92–108 (IKKETNTDSQPEAKEES) show a composition bias toward basic and acidic residues. Over residues 109 to 126 (TTSSTQQQQNNVTATTET) the composition is skewed to low complexity. Over residues 130–145 (NIEKENVKPSTDKTAT) the composition is skewed to basic and acidic residues. Residues 159-207 (NYTNNDVTTKPSTSEIQTKPTTPQESTNIENSQPQPTPSKVDNQVTDAT) are compositionally biased toward polar residues. The span at 216-241 (SKEELKNNPEKLKELVRNDNNTDRST) shows a compositional bias: basic and acidic residues. 3 CNA-B domains span residues 602–714 (LYKI…YKEP), 715–824 (KYNL…YKTP), and 825–935 (KYSL…EEDT). Positions 899 to 1117 (VTNTTEDDKD…GSENNGSNNA (219 aa)) are disordered. 2 stretches are compositionally biased toward acidic residues: residues 903-913 (TEDDKDADGGE) and 930-1080 (YFEE…DSDS). The LPXTG sorting signal motif lies at 1104–1108 (LPETG). Thr-1107 carries the post-translational modification Pentaglycyl murein peptidoglycan amidated threonine. The propeptide at 1108–1141 (GSENNGSNNATLFGGLFAALGSLLLFGRRKKQNK) is removed by sortase.

It belongs to the serine-aspartate repeat-containing protein (SDr) family. In terms of assembly, interacts with host complement factor H/CFAH (via C-terminus). Interacts with host complement regulator C4BPA.

The protein localises to the secreted. The protein resides in the cell wall. In terms of biological role, cell surface-associated calcium-binding protein which plays an important role in adhesion and pathogenesis. Contributes to the resistance to killing by innate immune components in blood and thus attenuates bacterial clearance by interacting with host complement factor H/CFAH and modulating its activity. Also inhibits bacterial opsonization and killing by interacting with host complement regulator C4BPA and thus inhibiting classical complement pathway activation. This Staphylococcus aureus (strain N315) protein is Serine-aspartate repeat-containing protein E (sdrE).